We begin with the raw amino-acid sequence, 91 residues long: Large ribosomal subunit protein eL43 (91 aa).

Residues 39 to 60 form a C4-type zinc finger; that stretch reads CSFCGKDAVRRSSVGIWKCNGC.

It belongs to the eukaryotic ribosomal protein eL43 family.

The polypeptide is Large ribosomal subunit protein eL43 (rpl37A) (Dictyostelium discoideum (Social amoeba)).